The primary structure comprises 421 residues: ATP-dependent RNA helicase eIF4A (421 aa).

A disordered region spans residues 1–26; the sequence is MSNDKGLEEIPEDQSTTPHKPTSNVG. The span at 13–26 shows a compositional bias: polar residues; it reads DQSTTPHKPTSNVG. A Q motif motif is present at residues 48 to 76; it reads DSFDAMELKPELLRGVYAYGFERPSAIQQ. The region spanning 79–249 is the Helicase ATP-binding domain; it reads IKPIIKGSDV…TKFMRDPVRI (171 aa). Position 92–99 (92–99) interacts with ATP; it reads AQSGTGKT. The DEAD box signature appears at 197–200; it reads DEAD. In terms of domain architecture, Helicase C-terminal spans 260-421; that stretch reads GIKQFYIAVE…EMPMNVADLI (162 aa).

Belongs to the DEAD box helicase family. eIF4A subfamily. Component of the eIF4F complex, which composition varies with external and internal environmental conditions. It is composed of at least eIF4A, eIF4E and eIF4G.

It localises to the cytoplasm. It carries out the reaction ATP + H2O = ADP + phosphate + H(+). ATP-dependent RNA helicase which is a subunit of the eIF4F complex involved in cap recognition and is required for mRNA binding to ribosome. In the current model of translation initiation, eIF4A unwinds RNA secondary structures in the 5'-UTR of mRNAs which is necessary to allow efficient binding of the small ribosomal subunit, and subsequent scanning for the initiator codon. The polypeptide is ATP-dependent RNA helicase eIF4A (tif1) (Aspergillus oryzae (strain ATCC 42149 / RIB 40) (Yellow koji mold)).